Here is a 1300-residue protein sequence, read N- to C-terminus: Insulin receptor-related protein (1300 aa).

Residues 1-26 form the signal peptide; the sequence is MAVPALWPWGVHLLMSLLSLGSGLDT. Residues asparagine 47 and asparagine 100 are each glycosylated (N-linked (GlcNAc...) asparagine). 9 disulfide bridges follow: cysteine 214/cysteine 222, cysteine 216/cysteine 228, cysteine 229/cysteine 237, cysteine 233/cysteine 246, cysteine 249/cysteine 258, cysteine 262/cysteine 274, cysteine 280/cysteine 300, cysteine 304/cysteine 317, and cysteine 320/cysteine 324. A glycan (N-linked (GlcNAc...) asparagine) is linked at asparagine 311. Residues asparagine 411, asparagine 492, asparagine 528, asparagine 616, asparagine 634, asparagine 756, asparagine 885, and asparagine 898 are each glycosylated (N-linked (GlcNAc...) asparagine). Fibronectin type-III domains are found at residues 483–603 and 607–707; these read QTRT…TLPA and VPQD…AQEV. The cysteines at positions 657 and 864 are disulfide-linked. Residues 747–921 are Extracellular-facing; the sequence is EAGLLRLGKN…LEEEDTGGMR (175 aa). The Fibronectin type-III 3 domain maps to 818-913; sequence IPGKVAWKAA…GVTFYITDLE (96 aa). The helical transmembrane segment at 922–943 threads the bilayer; sequence IFLTVTPVGFMLLVTLAALGFF. Residues 944–1300 are Cytoplasmic-facing; it reads YSRKRNSTLY…YSAPNGGPGH (357 aa). A Protein kinase domain is found at 979–1254; that stretch reads IAIIRELGQG…RIQDELRPSF (276 aa). ATP is bound by residues 985–993 and lysine 1013; that span reads LGQGSFGMV. Aspartate 1115 acts as the Proton acceptor in catalysis. Tyrosine 1145 and tyrosine 1146 each carry phosphotyrosine; by autocatalysis. The segment at 1273-1300 is disordered; that stretch reads LPTEAEPDSPPTLNGASDYSAPNGGPGH.

This sequence belongs to the protein kinase superfamily. Tyr protein kinase family. Insulin receptor subfamily. As to quaternary structure, probable tetramer of 2 alpha and 2 beta chains linked by disulfide bonds. The alpha chains contribute to the formation of the ligand-binding domain, while the beta chains carry the kinase domain. Post-translationally, autophosphorylated on tyrosine residues between pH 7.9 and pH 10.5. Highly expressed in the islets as well as in pancreatic beta-cells.

It localises to the membrane. It carries out the reaction L-tyrosyl-[protein] + ATP = O-phospho-L-tyrosyl-[protein] + ADP + H(+). Its function is as follows. Receptor with tyrosine-protein kinase activity. Functions as a pH sensing receptor which is activated by increased extracellular pH. Activates an intracellular signaling pathway that involves IRS1 and AKT1/PKB. This is Insulin receptor-related protein (Insrr) from Mus musculus (Mouse).